Here is a 729-residue protein sequence, read N- to C-terminus: Fatty acid oxidation complex subunit alpha (729 aa).

An enoyl-CoA hydratase/isomerase region spans residues 1–189 (MLYKGDTLYL…KIGLVDGVVK (189 aa)). Asp-296 contacts substrate. Residues 311 to 729 (ETPKQAAVLG…ARLVGDLKTA (419 aa)) form a 3-hydroxyacyl-CoA dehydrogenase region. NAD(+) contacts are provided by residues Met-324, Asp-343, 400–402 (VVE), Lys-407, and Ser-429. His-450 serves as the catalytic For 3-hydroxyacyl-CoA dehydrogenase activity. Asn-453 is a binding site for NAD(+). Substrate is bound by residues Asn-500 and Tyr-660.

This sequence in the N-terminal section; belongs to the enoyl-CoA hydratase/isomerase family. It in the C-terminal section; belongs to the 3-hydroxyacyl-CoA dehydrogenase family. In terms of assembly, heterotetramer of two alpha chains (FadB) and two beta chains (FadA).

The enzyme catalyses a (3S)-3-hydroxyacyl-CoA + NAD(+) = a 3-oxoacyl-CoA + NADH + H(+). It carries out the reaction a (3S)-3-hydroxyacyl-CoA = a (2E)-enoyl-CoA + H2O. It catalyses the reaction a 4-saturated-(3S)-3-hydroxyacyl-CoA = a (3E)-enoyl-CoA + H2O. The catalysed reaction is (3S)-3-hydroxybutanoyl-CoA = (3R)-3-hydroxybutanoyl-CoA. The enzyme catalyses a (3Z)-enoyl-CoA = a 4-saturated (2E)-enoyl-CoA. It carries out the reaction a (3E)-enoyl-CoA = a 4-saturated (2E)-enoyl-CoA. The protein operates within lipid metabolism; fatty acid beta-oxidation. Involved in the aerobic and anaerobic degradation of long-chain fatty acids via beta-oxidation cycle. Catalyzes the formation of 3-oxoacyl-CoA from enoyl-CoA via L-3-hydroxyacyl-CoA. It can also use D-3-hydroxyacyl-CoA and cis-3-enoyl-CoA as substrate. This Escherichia coli (strain SE11) protein is Fatty acid oxidation complex subunit alpha.